The primary structure comprises 465 residues: Antithrombin-III (465 aa).

Positions 1-32 are cleaved as a signal peptide; that stretch reads MYSPGAGSGAAGERKLCLLSLLLIGALGCAIC. 2 cysteine pairs are disulfide-bonded: Cys41-Cys161 and Cys54-Cys128. The residue at position 64 (Thr64) is a Phosphothreonine. A Phosphoserine modification is found at Ser69. Residue Trp82 coordinates heparin. The N-linked (GlcNAc...) asparagine glycan is linked to Asn129. Position 162 (Arg162) interacts with heparin. N-linked (GlcNAc...) asparagine glycosylation is present at Asn168. Residue Arg178 coordinates heparin. N-linked (GlcNAc...) asparagine glycans are attached at residues Asn188 and Asn225. Cys280 and Cys463 form a disulfide bridge.

This sequence belongs to the serpin family. In terms of assembly, forms protease inhibiting heterodimer with TMPRSS7. In terms of processing, phosphorylated by FAM20C in the extracellular medium. Plasma.

The protein localises to the secreted. The protein resides in the extracellular space. Functionally, most important serine protease inhibitor in plasma that regulates the blood coagulation cascade. AT-III inhibits thrombin, matriptase-3/TMPRSS7, as well as factors IXa, Xa and XIa. Its inhibitory activity is greatly enhanced in the presence of heparin. This chain is Antithrombin-III (Serpinc1), found in Mus musculus (Mouse).